The sequence spans 31 residues: Cytochrome b6-f complex subunit 6 (31 aa).

Residues 4–26 (ITSYFGFLLAALTVTSALFIGLS) form a helical membrane-spanning segment.

This sequence belongs to the PetL family. The 4 large subunits of the cytochrome b6-f complex are cytochrome b6, subunit IV (17 kDa polypeptide, PetD), cytochrome f and the Rieske protein, while the 4 small subunits are PetG, PetL, PetM and PetN. The complex functions as a dimer.

It is found in the plastid. The protein resides in the chloroplast thylakoid membrane. Its function is as follows. Component of the cytochrome b6-f complex, which mediates electron transfer between photosystem II (PSII) and photosystem I (PSI), cyclic electron flow around PSI, and state transitions. PetL is important for photoautotrophic growth as well as for electron transfer efficiency and stability of the cytochrome b6-f complex. This is Cytochrome b6-f complex subunit 6 from Daucus carota (Wild carrot).